The sequence spans 103 residues: Large ribosomal subunit protein bL21 (103 aa).

This sequence belongs to the bacterial ribosomal protein bL21 family. In terms of assembly, part of the 50S ribosomal subunit. Contacts protein L20.

This protein binds to 23S rRNA in the presence of protein L20. This is Large ribosomal subunit protein bL21 from Clostridium acetobutylicum (strain ATCC 824 / DSM 792 / JCM 1419 / IAM 19013 / LMG 5710 / NBRC 13948 / NRRL B-527 / VKM B-1787 / 2291 / W).